The following is a 493-amino-acid chain: E3 ubiquitin-protein ligase TRIM35 (493 aa).

At Met1 the chain carries N-acetylmethionine. 2 positions are modified to phosphoserine: Ser4 and Ser8. An RING-type zinc finger spans residues 21-61; sequence CAVCYDPFRDAVTLRCGHNFCRGCVSRCWEVQVSPTCPVCK. Residues 96–137 form a B box-type zinc finger; that stretch reads RFSRVCRLHRGQLSLFCLEDKELLCCSCQADPRHQGHRVQPV. Zn(2+) contacts are provided by Cys101, His104, Cys123, and His129. A coiled-coil region spans residues 210 to 251; that stretch reads AEETRQKQLLADEKMKQLTEETEVLAHEIERLQMEMKEDDVS. In terms of domain architecture, B30.2/SPRY spans 284-487; the sequence is LGSLQYRVWK…LRICPLHISV (204 aa).

The protein belongs to the TRIM/RBCC family. In terms of assembly, interacts with PKM isoform M2, but not isoform M1; this interaction may compete with that between PKM and FGFR1, and hence reduces FGFR1-dependent tyrosine phosphorylation of PKM. Interacts with IRF7; this interaction promotes IRF7 proteasomal degradation. Interacts with TRAF3; this interaction promotes TRAF3 activation.

It is found in the cytoplasm. The protein resides in the nucleus. The catalysed reaction is S-ubiquitinyl-[E2 ubiquitin-conjugating enzyme]-L-cysteine + [acceptor protein]-L-lysine = [E2 ubiquitin-conjugating enzyme]-L-cysteine + N(6)-ubiquitinyl-[acceptor protein]-L-lysine.. Its pathway is protein modification; protein ubiquitination. E3 ubiquitin-protein ligase that participates in multiple biological processes including cell death, glucose metabolism, and in particular, the innate immune response. Mediates 'Lys-63'-linked polyubiquitination of TRAF3 thereby promoting type I interferon production via RIG-I signaling pathway. Can also catalyze 'Lys-48'-linked polyubiquitination and proteasomal degradation of viral proteins such as influenza virus PB2. Acts as a negative feedback regulator of TLR7- and TLR9-triggered signaling. Mechanistically, promotes the 'Lys-48'-linked ubiquitination of IRF7 and induces its degradation via a proteasome-dependent pathway. Reduces FGFR1-dependent tyrosine phosphorylation of PKM, inhibiting PKM-dependent lactate production, glucose metabolism, and cell growth. The protein is E3 ubiquitin-protein ligase TRIM35 (TRIM35) of Homo sapiens (Human).